The primary structure comprises 138 residues: Cyclin-dependent kinase 4 inhibitor B (138 aa).

One copy of the ANK 1; truncated repeat lies at Gly13–Asp39. ANK repeat units lie at residues Phe46–Cys74, Thr79–Val108, and Trp112–Asp138.

This sequence belongs to the CDKN2 cyclin-dependent kinase inhibitor family. As to quaternary structure, heterodimer of CDKN2B with CDK4 or CDK6. Isoform 2 does not interact with CDK4 nor CDK6. As to expression, isoform 2 is expressed in normal (keratinocytes, fibroblasts) and tumor cell lines.

The protein localises to the cytoplasm. In terms of biological role, interacts strongly with CDK4 and CDK6. Potent inhibitor. Potential effector of TGF-beta induced cell cycle arrest. The sequence is that of Cyclin-dependent kinase 4 inhibitor B (CDKN2B) from Homo sapiens (Human).